Reading from the N-terminus, the 1400-residue chain is DNA-directed RNA polymerase subunit beta' (1400 aa).

Zn(2+) contacts are provided by Cys71, Cys73, Cys86, and Cys89. Positions 462, 464, and 466 each coordinate Mg(2+). Cys811, Cys885, Cys892, and Cys895 together coordinate Zn(2+).

This sequence belongs to the RNA polymerase beta' chain family. As to quaternary structure, the RNAP catalytic core consists of 2 alpha, 1 beta, 1 beta' and 1 omega subunit. When a sigma factor is associated with the core the holoenzyme is formed, which can initiate transcription. The cofactor is Mg(2+). Requires Zn(2+) as cofactor.

The catalysed reaction is RNA(n) + a ribonucleoside 5'-triphosphate = RNA(n+1) + diphosphate. Functionally, DNA-dependent RNA polymerase catalyzes the transcription of DNA into RNA using the four ribonucleoside triphosphates as substrates. This is DNA-directed RNA polymerase subunit beta' from Brucella suis (strain ATCC 23445 / NCTC 10510).